The primary structure comprises 131 residues: Peptide methionine sulfoxide reductase MsrB (131 aa).

Residues 9–131 (DEDWKKELTP…NSASLKFQKE (123 aa)) form the MsrB domain. Residues C48, C51, C97, and C100 each coordinate Zn(2+). C120 (nucleophile) is an active-site residue.

The protein belongs to the MsrB Met sulfoxide reductase family. The cofactor is Zn(2+).

It carries out the reaction L-methionyl-[protein] + [thioredoxin]-disulfide + H2O = L-methionyl-(R)-S-oxide-[protein] + [thioredoxin]-dithiol. This chain is Peptide methionine sulfoxide reductase MsrB, found in Leptospira interrogans serogroup Icterohaemorrhagiae serovar Lai (strain 56601).